The sequence spans 88 residues: Probable Fe(2+)-trafficking protein (88 aa).

Belongs to the Fe(2+)-trafficking protein family.

Could be a mediator in iron transactions between iron acquisition and iron-requiring processes, such as synthesis and/or repair of Fe-S clusters in biosynthetic enzymes. This Alkalilimnicola ehrlichii (strain ATCC BAA-1101 / DSM 17681 / MLHE-1) protein is Probable Fe(2+)-trafficking protein.